The chain runs to 253 residues: Sulfate transporter CysZ (253 aa).

The next 4 helical transmembrane spans lie at 31-51, 75-95, 151-171, and 222-242; these read FVIL…WWLF, LLWP…FSTI, IVLL…PVLW, and IPLL…AMWV.

Belongs to the CysZ family.

It localises to the cell inner membrane. Functionally, high affinity, high specificity proton-dependent sulfate transporter, which mediates sulfate uptake. Provides the sulfur source for the cysteine synthesis pathway. The protein is Sulfate transporter CysZ of Escherichia coli O139:H28 (strain E24377A / ETEC).